The primary structure comprises 230 residues: Cytidylate kinase (230 aa).

Position 10 to 18 (10 to 18) interacts with ATP; it reads GPAGSGKST.

The protein belongs to the cytidylate kinase family. Type 1 subfamily.

The protein localises to the cytoplasm. It carries out the reaction CMP + ATP = CDP + ADP. The catalysed reaction is dCMP + ATP = dCDP + ADP. The protein is Cytidylate kinase of Leptospira borgpetersenii serovar Hardjo-bovis (strain L550).